The sequence spans 126 residues: Protein ApaG (126 aa).

An ApaG domain is found at N2–H126.

This chain is Protein ApaG, found in Shewanella pealeana (strain ATCC 700345 / ANG-SQ1).